The sequence spans 512 residues: Perphorin-1 (512 aa).

The signal sequence occupies residues 1 to 18; the sequence is MMRKALLALCVATAFAVA. Residues N49, N96, N118, N378, N381, N403, and N476 are each glycosylated (N-linked (GlcNAc...) asparagine).

It localises to the secreted. It is found in the extracellular space. The protein localises to the extracellular matrix. May be involved in conversion of asexual males and females to the sexual pathway. In Volvox carteri (Green alga), this protein is Perphorin-1.